A 113-amino-acid polypeptide reads, in one-letter code: uncharacterized protein (113 aa).

This is an uncharacterized protein from Schizosaccharomyces pombe (strain 972 / ATCC 24843) (Fission yeast).